We begin with the raw amino-acid sequence, 168 residues long: Putative apoptosis regulator A9 (168 aa).

The helical transmembrane segment at 143–162 (SAFYFLTAAASCLTLLLLYF) threads the bilayer.

It is found in the host membrane. Suppresses apoptosis in host cell and thus facilitates production of progeny virions. The polypeptide is Putative apoptosis regulator A9 (A9) (Alcelaphine herpesvirus 1 (strain C500) (AlHV-1)).